Here is a 285-residue protein sequence, read N- to C-terminus: Acetyl-coenzyme A carboxylase carboxyl transferase subunit beta (285 aa).

The CoA carboxyltransferase N-terminal domain occupies 23–285 (VFRRCDGCSH…HLTAGRRARR (263 aa)). Zn(2+) contacts are provided by Cys27, Cys30, Cys46, and Cys49. The C4-type zinc-finger motif lies at 27 to 49 (CDGCSHTHDAAELARTFEVCSQC).

This sequence belongs to the AccD/PCCB family. As to quaternary structure, acetyl-CoA carboxylase is a heterohexamer composed of biotin carboxyl carrier protein (AccB), biotin carboxylase (AccC) and two subunits each of ACCase subunit alpha (AccA) and ACCase subunit beta (AccD). Zn(2+) serves as cofactor.

It localises to the cytoplasm. The enzyme catalyses N(6)-carboxybiotinyl-L-lysyl-[protein] + acetyl-CoA = N(6)-biotinyl-L-lysyl-[protein] + malonyl-CoA. It participates in lipid metabolism; malonyl-CoA biosynthesis; malonyl-CoA from acetyl-CoA: step 1/1. In terms of biological role, component of the acetyl coenzyme A carboxylase (ACC) complex. Biotin carboxylase (BC) catalyzes the carboxylation of biotin on its carrier protein (BCCP) and then the CO(2) group is transferred by the transcarboxylase to acetyl-CoA to form malonyl-CoA. In Sorangium cellulosum (strain So ce56) (Polyangium cellulosum (strain So ce56)), this protein is Acetyl-coenzyme A carboxylase carboxyl transferase subunit beta.